Consider the following 482-residue polypeptide: Putative metabolite transport protein YfiG (482 aa).

The Cytoplasmic portion of the chain corresponds to 1-29 (MSTKKKEAVIGKESLAHKGLLRTITLVST). The chain crosses the membrane as a helical span at residues 30 to 50 (FGGLLFGYDTGVINGALPFMA). At 51–59 (TAGQLNLTP) the chain is on the extracellular side. Residues 60–80 (VTEGLVASSLLLGAAFGAMFG) form a helical membrane-spanning segment. Over 81–92 (GRLSDRHGRRKT) the chain is Cytoplasmic. A helical membrane pass occupies residues 93-113 (ILYLALLFIAATLGCTFSPNA). Residues 114-120 (SVMIAFR) are Extracellular-facing. A helical transmembrane segment spans residues 121 to 141 (FLLGLAVGCASVTVPTFLAEI). Residues 142 to 155 (SPAERRGRIVTQNE) lie on the Cytoplasmic side of the membrane. A helical membrane pass occupies residues 156-176 (LMIVIGQLLAYTFNAIIGSTM). Topologically, residues 177-184 (GESANVWR) are extracellular. The chain crosses the membrane as a helical span at residues 185-205 (YMLVIATLPAVVLWFGMLIVP). The Cytoplasmic portion of the chain corresponds to 206 to 263 (ESPRWLAAKGRMGDALRVLRQIREDSQAQQEIKEIKHAIEGTAKKAGFHDFQEPWIRR). The chain crosses the membrane as a helical span at residues 264-284 (ILFIGIGIAIVQQITGVNSIM). The Extracellular portion of the chain corresponds to 285-301 (YYGTEILREAGFQTEAA). The helical transmembrane segment at 302-322 (LIGNIANGVISVIAVIFGIWL) threads the bilayer. Residues 323–331 (LGKVRRRPM) lie on the Cytoplasmic side of the membrane. 2 consecutive transmembrane segments (helical) span residues 332-352 (LIIGQIGTMTALLLIGILSIV) and 353-373 (LEGTPALPYVVLSLTILFLAF). The Cytoplasmic segment spans residues 374-400 (QQTAISTVTWLMLSEIFPMHVRGLGMG). A helical membrane pass occupies residues 401–421 (ISTFCLWTANFLIGFTFPILL). Residues 422–423 (NH) are Extracellular-facing. The chain crosses the membrane as a helical span at residues 424–444 (IGMSATFFIFVAMNILAILFV). The Cytoplasmic portion of the chain corresponds to 445–482 (KKYVPETKGRSLEQLEHSFRQYGRRADQEIQNQTTHLS).

Belongs to the major facilitator superfamily. Sugar transporter (TC 2.A.1.1) family.

The protein resides in the cell membrane. The polypeptide is Putative metabolite transport protein YfiG (yfiG) (Bacillus subtilis (strain 168)).